We begin with the raw amino-acid sequence, 401 residues long: Probable tRNA sulfurtransferase (401 aa).

The region spanning 60–165 (EPIIDKLKTV…QDGTYVTCHD (106 aa)) is the THUMP domain. ATP is bound by residues 183 to 184 (ML), 208 to 209 (HF), arginine 265, glycine 287, and glutamine 296.

This sequence belongs to the ThiI family.

The protein localises to the cytoplasm. The enzyme catalyses [ThiI sulfur-carrier protein]-S-sulfanyl-L-cysteine + a uridine in tRNA + 2 reduced [2Fe-2S]-[ferredoxin] + ATP + H(+) = [ThiI sulfur-carrier protein]-L-cysteine + a 4-thiouridine in tRNA + 2 oxidized [2Fe-2S]-[ferredoxin] + AMP + diphosphate. The catalysed reaction is [ThiS sulfur-carrier protein]-C-terminal Gly-Gly-AMP + S-sulfanyl-L-cysteinyl-[cysteine desulfurase] + AH2 = [ThiS sulfur-carrier protein]-C-terminal-Gly-aminoethanethioate + L-cysteinyl-[cysteine desulfurase] + A + AMP + 2 H(+). It functions in the pathway cofactor biosynthesis; thiamine diphosphate biosynthesis. Functionally, catalyzes the ATP-dependent transfer of a sulfur to tRNA to produce 4-thiouridine in position 8 of tRNAs, which functions as a near-UV photosensor. Also catalyzes the transfer of sulfur to the sulfur carrier protein ThiS, forming ThiS-thiocarboxylate. This is a step in the synthesis of thiazole, in the thiamine biosynthesis pathway. The sulfur is donated as persulfide by IscS. In Geobacillus thermodenitrificans (strain NG80-2), this protein is Probable tRNA sulfurtransferase.